The primary structure comprises 263 residues: HTH-type transcriptional repressor NanR (263 aa).

Positions 1-25 (MDVMNAFDSQAEDSPTSLGRSLRRR) are disordered. The HTH gntR-type domain occupies 30–98 (KKLSEMVEEE…NGERARVSRP (69 aa)). A DNA-binding region (H-T-H motif) is located at residues 58 to 77 (ERELMAFFNVGRPSVREALA).

It belongs to the NanR family.

Functionally, transcriptional repressor that controls expression of the genes required for the catabolism of sialic acids. In Salmonella schwarzengrund (strain CVM19633), this protein is HTH-type transcriptional repressor NanR.